The primary structure comprises 274 residues: 2-dehydro-3-deoxyphosphooctonate aldolase (274 aa).

The protein belongs to the KdsA family.

Its subcellular location is the cytoplasm. The enzyme catalyses D-arabinose 5-phosphate + phosphoenolpyruvate + H2O = 3-deoxy-alpha-D-manno-2-octulosonate-8-phosphate + phosphate. It functions in the pathway carbohydrate biosynthesis; 3-deoxy-D-manno-octulosonate biosynthesis; 3-deoxy-D-manno-octulosonate from D-ribulose 5-phosphate: step 2/3. Its pathway is bacterial outer membrane biogenesis; lipopolysaccharide biosynthesis. The sequence is that of 2-dehydro-3-deoxyphosphooctonate aldolase from Rickettsia felis (strain ATCC VR-1525 / URRWXCal2) (Rickettsia azadi).